The sequence spans 438 residues: Actin-like protein 7A (438 aa).

A required for interaction with TES region spans residues 36–56 (ASLKDGPAKRAVWVRRDHSEP).

Belongs to the actin family. As to quaternary structure, interacts (via N-terminus) with TES (via LIM domain 2). Heterodimer with TES; the heterodimer interacts with ENAH to form a heterotrimer. Interacts with ACTL9. Interacts with CYLC1; the interaction may be relevant for proper acrosome attachment to the nuclear envelope.

The protein resides in the cytoplasm. Its subcellular location is the cytoskeleton. The protein localises to the golgi apparatus. It localises to the nucleus. In terms of biological role, essential for normal spermatogenesis and male fertility. Required for normal sperm head morphology, acroplaxome formation, acrosome attachment, and acrosome granule stability. May anchor and stabilize acrosomal adherence to the acroplaxome at least in part by facilitating the presence of F-actin in the subacrosomal space. May play an important role in formation and fusion of Golgi-derived vesicles during acrosome biogenesis. This is Actin-like protein 7A (ACTL7A) from Bos taurus (Bovine).